Consider the following 400-residue polypeptide: Putative zinc-binding protein ORF78 (400 aa).

Positions 9-33 are disordered; that stretch reads LPRKRRAVAQPRTRQPPPKVHREDT.

The sequence is that of Putative zinc-binding protein ORF78 (ORF78) from Ictalurid herpesvirus 1 (strain Auburn) (IcHV-1).